Consider the following 543-residue polypeptide: MNTEPSPNHYSAISSSDQNLTRRSGNYQPTMWDFEYIQSIHNDYAGDKYMKRFNELKEEMKKMIMAEGSQELEKLELIDNLQRLGVSYHFKHEIMQILSSIKQHSTPADSLYATALKFRLLREHGFHISQEIFDGLSETHTKDTKGMLYLYEASFLATEGESELEQAWTEKHLREYLKNKNIDQNVAKLVHRALELPLHWRMLRLEARWFISFYKKRQDMIPLLLELAILDFNIVQAAHIQDLKYVARWWKETGLAENLPFARDRLVENFFWTIGVNFLPQYGYFRRIETKVNALVTTIDDVYDVFGTLDELQCFTDAIQRWNTDELDNLPDNMKMCYFALDDFINEVACDALIVPYLRNAWTDLCKSYLIEAKWYFSKYIPTMEEYMDNAWISISAPVILVHAYFLIANPVNKEALHYLRNYHDIIRWSALILRLANDLGTSSDELKRGDVPKSIQCYMNEKKVSEEEARQHIRLLISETWKKLNEAHNVAAHPFPKMFVKSAMNLARMAQCMYQHGDGHGGQNSETQNRIMALLFESIPPA.

The disordered stretch occupies residues 1 to 22; that stretch reads MNTEPSPNHYSAISSSDQNLTR. Arg-263, Asp-300, Asp-304, Arg-435, and Asn-438 together coordinate (2E)-geranyl diphosphate. The Mg(2+) site is built by Asp-300 and Asp-304. A DDXXD motif motif is present at residues 300 to 304; the sequence is DDVYD. Mg(2+)-binding residues include Asn-438, Thr-442, and Glu-446.

The protein belongs to the terpene synthase family. Tpsb subfamily. In terms of assembly, monomer. It depends on Mg(2+) as a cofactor. Mn(2+) is required as a cofactor. As to expression, confined to flowers.

The protein localises to the plastid. It localises to the chloroplast. It catalyses the reaction (2E)-geranyl diphosphate + H2O = (S)-alpha-terpineol + diphosphate. The enzyme catalyses (2E)-geranyl diphosphate = sabinene + diphosphate. It carries out the reaction (2E)-geranyl diphosphate = beta-myrcene + diphosphate. The catalysed reaction is (2E)-geranyl diphosphate = limonene + diphosphate. It catalyses the reaction (2E)-geranyl diphosphate + H2O = 1,8-cineole + diphosphate. It functions in the pathway secondary metabolite biosynthesis; terpenoid biosynthesis. In terms of biological role, monoterpene synthase (TPS) involved in the biosynthesis of monoterpene natural products of the 'cineole cassette', volatile compounds present in floral scent. Catalyzes the conversion of (2E)-geranyl diphosphate (GPP) into alpha-terpineol and, as minor products, sabinene, beta-myrcene, limonene and 1,8-cineole. The protein is Terpineol synthase, chloroplastic of Nicotiana alata (Winged tobacco).